A 421-amino-acid polypeptide reads, in one-letter code: Probable sugar-binding periplasmic protein (421 aa).

The first 27 residues, 1–27 (MHKLLKLAAMGTAACALLAGMAPVANA), serve as a signal peptide directing secretion.

It belongs to the bacterial solute-binding protein 1 family.

It localises to the periplasm. Functionally, part of a binding-protein-dependent transport system for a sugar. The chain is Probable sugar-binding periplasmic protein from Brucella melitensis biotype 1 (strain ATCC 23456 / CCUG 17765 / NCTC 10094 / 16M).